The following is an 887-amino-acid chain: MLSRLFRMHGLFVASHPWEVIVGTVTLTICMMSMNMFTGNNKICGWNYECPKFEEDVLSSDIIILTITRCIAILYIYFQFQNLRQLGSKYILGIAGLFTIFSSFVFSTVVIHFLDKELTGLNEALPFFLLLIDLSRASALAKFALSSNSQDEVRENIARGMAILGPTFTLDALVECLVIGVGTMSGVRQLEIMCCFGCMSVLANYFVFMTFFPACVSLVLELSRESREGRPIWQLSHFARVLEEEENKPNPVTQRVKMIMSLGLVLVHAHSRWIADPSPQNSTTEHSKVSLGLDEDVSKRIEPSVSLWQFYLSKMISMDIEQVVTLSLAFLLAVKYIFFEQAETESTLSLKNPITSPVATPKKAPDNCCRREPVLSRRNEKLSSVEEEPGVNQDRKVEVIKPLVAETESTSRATFVLGASGGCSPVALGTQEPEIELPSEPRPNEECLQILESAEKGAKFLSDAEIIQLVNAKHIPAYKLETLMETHERGVSIRRQLLSTKLPEPSSLQYLPYRDYNYSLVMGACCENVIGYMPIPVGVAGPLCLDGKEYQVPMATTEGCLVASTNRGCRAIGLGGGASSRVLADGMTRGPVVRLPRACDSAEVKAWLETPEGFAVIKDAFDSTSRFARLQKLHVTMAGRNLYIRFQSKTGDAMGMNMISKGTEKALVKLQEFFPEMQILAVSGNYCTDKKPAAVNWIEGRGKTVVCEAVIPARVVREVLKTTTEAMIDVNINKNLVGSAMAGSIGGYNAHAANIVTAIYIACGQDAAQNVGSSNCITLMEASGPTNEDLYISCTMPSIEIGTVGGGTNLLPQQACLQMLGVQGACKDNPGENARQLARIVCGTVMAGELSLMAALAAGHLVRSHMVHNRSKINLQDLQGTCTKKAA.

Over 1–9 (MLSRLFRMH) the chain is Cytoplasmic. The chain crosses the membrane as a helical span at residues 10–39 (GLFVASHPWEVIVGTVTLTICMMSMNMFTG). The Lumenal segment spans residues 40–56 (NNKICGWNYECPKFEED). Residues 57–78 (VLSSDIIILTITRCIAILYIYF) form a helical membrane-spanning segment. The region spanning 61–218 (DIIILTITRC…MTFFPACVSL (158 aa)) is the SSD domain. An INSIG-binding motif motif is present at residues 75–78 (YIYF). Residues 79–89 (QFQNLRQLGSK) lie on the Cytoplasmic side of the membrane. A Glycyl lysine isopeptide (Lys-Gly) (interchain with G-Cter in ubiquitin) cross-link involves residue lysine 89. The helical transmembrane segment at 90–114 (YILGIAGLFTIFSSFVFSTVVIHFL) threads the bilayer. Residues 115-123 (DKELTGLNE) are Lumenal-facing. A helical transmembrane segment spans residues 124–149 (ALPFFLLLIDLSRASALAKFALSSNS). The Cytoplasmic portion of the chain corresponds to 150–159 (QDEVRENIAR). Residues 160 to 187 (GMAILGPTFTLDALVECLVIGVGTMSGV) traverse the membrane as a helical segment. The Lumenal portion of the chain corresponds to 188–191 (RQLE). Residues 192 to 220 (IMCCFGCMSVLANYFVFMTFFPACVSLVL) traverse the membrane as a helical segment. Residues 221-248 (ELSRESREGRPIWQLSHFARVLEEEENK) lie on the Cytoplasmic side of the membrane. A Glycyl lysine isopeptide (Lys-Gly) (interchain with G-Cter in ubiquitin) cross-link involves residue lysine 248. Residues 249-275 (PNPVTQRVKMIMSLGLVLVHAHSRWIA) traverse the membrane as a helical segment. Topologically, residues 276-314 (DPSPQNSTTEHSKVSLGLDEDVSKRIEPSVSLWQFYLSK) are lumenal. The N-linked (GlcNAc...) asparagine glycan is linked to asparagine 281. A helical membrane pass occupies residues 315–339 (MISMDIEQVVTLSLAFLLAVKYIFF). Over 340–887 (EQAETESTLS…LQGTCTKKAA (548 aa)) the chain is Cytoplasmic. Catalysis depends on charge relay system residues glutamate 558, lysine 690, and aspartate 766. Histidine 865 acts as the Proton donor in catalysis. Serine 871 is modified (phosphoserine; by AMPK).

Belongs to the HMG-CoA reductase family. As to quaternary structure, homotetramer. Homodimer. Interacts (via its SSD) with INSIG1; the interaction, accelerated by sterols, leads to the recruitment of HMGCR to AMFR/gp78 for its ubiquitination by the sterol-mediated ERAD pathway. Interacts with UBIAD1. In terms of processing, undergoes sterol-mediated ubiquitination and ER-associated degradation (ERAD). Accumulation of sterols in the endoplasmic reticulum (ER) membrane, triggers binding of the reductase to the ER membrane protein INSIG1 or INSIG2. The INSIG1 binding leads to the recruitment of the ubiquitin ligase, AMFR/gp78, RNF139 or RNF145, initiating ubiquitination of the reductase. The ubiquitinated reductase is then extracted from the ER membrane and delivered to cytosolic 26S proteosomes by a mechanism probably mediated by the ATPase Valosin-containing protein VCP/p97. The INSIG2-binding leads to the recruitment of the ubiquitin ligase RNF139, initiating ubiquitination of the reductase. Lys-248 is the main site of ubiquitination. Ubiquitination is enhanced by the presence of a geranylgeranylated protein. N-glycosylated. Deglycosylated by NGLY1 on release from the endoplasmic reticulum (ER) in a sterol-mediated manner. Post-translationally, phosphorylated. Phosphorylation at Ser-871 reduces the catalytic activity.

The protein resides in the endoplasmic reticulum membrane. It is found in the peroxisome membrane. It catalyses the reaction (R)-mevalonate + 2 NADP(+) + CoA = (3S)-3-hydroxy-3-methylglutaryl-CoA + 2 NADPH + 2 H(+). The protein operates within metabolic intermediate biosynthesis; (R)-mevalonate biosynthesis; (R)-mevalonate from acetyl-CoA: step 3/3. With respect to regulation, regulated by a negative feedback mechanism through sterols and non-sterol metabolites derived from mevalonate. Phosphorylation at Ser-871 down-regulates the catalytic activity. Catalyzes the conversion of (3S)-hydroxy-3-methylglutaryl-CoA (HMG-CoA) to mevalonic acid, the rate-limiting step in the synthesis of cholesterol and other isoprenoids, thus plays a critical role in cellular cholesterol homeostasis. The sequence is that of 3-hydroxy-3-methylglutaryl-coenzyme A reductase (HMGCR) from Mesocricetus auratus (Golden hamster).